The primary structure comprises 109 residues: Small ribosomal subunit protein uS17 (109 aa).

The protein belongs to the universal ribosomal protein uS17 family. In terms of assembly, part of the 30S ribosomal subunit.

Its function is as follows. One of the primary rRNA binding proteins, it binds specifically to the 5'-end of 16S ribosomal RNA. This chain is Small ribosomal subunit protein uS17, found in Thermoplasma volcanium (strain ATCC 51530 / DSM 4299 / JCM 9571 / NBRC 15438 / GSS1).